A 340-amino-acid chain; its full sequence is Erlin-2 (340 aa).

Residues 1-3 lie on the Cytoplasmic side of the membrane; it reads MAQ. Residues 4-24 form a helical membrane-spanning segment; sequence LGAVVAVASSFFCASLFSAVH. Residues 25–340 lie on the Lumenal side of the membrane; the sequence is KIEEGHIGVY…EPLEAPTKEN (316 aa). N-linked (GlcNAc...) asparagine glycosylation occurs at Asn106. Positions 177-309 are interaction with ERLIN1; it reads EAIRRNYELM…DIPNMFMDSA (133 aa). Position 267 is an N6-acetyllysine (Lys267).

The protein belongs to the band 7/mec-2 family. As to quaternary structure, forms a heteromeric complex with ERLIN1. In complex with ERLIN1, interacts with RNF170. Interacts with activated ITPR1, independently of the degree of ITPR1 polyubiquitination. Interacts with SCAP, INSIG1, SREBF1 and SREBF2 under cholesterol sufficiency conditions; indicative for an association with the SCAP-SREBP-INSIG complex. Probably part of an AMFR/gp78 and INSIG1-containing ubiquitin ligase complex involved in ERAD of HMGCR. Interacts with TMUB1; TMUB1 bridges the association with AMFR. Interacts with SYVN1 and RNF139. Interacts with TMEM259. Interacts with TMEM41B. Deubiquitinated by USP25; leading to stabilization.

The protein localises to the endoplasmic reticulum membrane. Its function is as follows. Component of the ERLIN1/ERLIN2 complex which mediates the endoplasmic reticulum-associated degradation (ERAD) of inositol 1,4,5-trisphosphate receptors (IP3Rs) such as ITPR1. Promotes sterol-accelerated ERAD of HMGCR probably implicating an AMFR/gp78-containing ubiquitin ligase complex. Involved in regulation of cellular cholesterol homeostasis by regulation the SREBP signaling pathway. May promote ER retention of the SCAP-SREBF complex. This is Erlin-2 (Erlin2) from Mus musculus (Mouse).